Here is a 99-residue protein sequence, read N- to C-terminus: METLNFQFPAAEPGRGRTLVGCVSSGDLEVLIEPGTAGSLQIQVITSVNGSAARWAQLFQRLFEGRAWPAVNIDIHDFGATPGVVRLRLEQGFEEIAHD.

Residue Ser-25 is modified to O-(phosphoribosyl dephospho-coenzyme A)serine.

It belongs to the MdcC family. Post-translationally, covalently binds the prosthetic group of malonate decarboxylase.

The protein resides in the cytoplasm. Its function is as follows. Subunit of malonate decarboxylase, it is an acyl carrier protein to which acetyl and malonyl thioester residues are bound via a 2'-(5''-phosphoribosyl)-3'-dephospho-CoA prosthetic group and turn over during the catalytic mechanism. The polypeptide is Malonate decarboxylase acyl carrier protein (Pseudomonas putida (Arthrobacter siderocapsulatus)).